The following is a 308-amino-acid chain: Protoheme IX farnesyltransferase (308 aa).

A run of 8 helical transmembrane segments spans residues 31-51 (VIELLLVTAIPAMLLAQRGTV), 53-73 (PLLIVNTLIGGMLAAGGANAL), 102-122 (NALVFGLVLTAGSFLWLWWTT), 124-144 (LLSGLLALATIAFYVFIYTLL), 149-169 (TSQNVVWGGAAGCMPVMIGWS), 170-190 (AVTGTIQWPALVMFAIIFFWT), 240-260 (LALATGWLYAAVALVAGVWFL), and 288-308 (YLAVVFCALAIDSAIGLPHLF).

The protein belongs to the UbiA prenyltransferase family. Protoheme IX farnesyltransferase subfamily.

The protein resides in the cell membrane. The catalysed reaction is heme b + (2E,6E)-farnesyl diphosphate + H2O = Fe(II)-heme o + diphosphate. It participates in porphyrin-containing compound metabolism; heme O biosynthesis; heme O from protoheme: step 1/1. In terms of biological role, converts heme B (protoheme IX) to heme O by substitution of the vinyl group on carbon 2 of heme B porphyrin ring with a hydroxyethyl farnesyl side group. This Mycolicibacterium paratuberculosis (strain ATCC BAA-968 / K-10) (Mycobacterium paratuberculosis) protein is Protoheme IX farnesyltransferase.